Reading from the N-terminus, the 401-residue chain is Inositol phosphorylceramide synthase catalytic subunit AUR1 (401 aa).

The Cytoplasmic segment spans residues 1 to 41; that stretch reads MANPFSRWFLSERPPNCHVADLETSLDPHQTLLKVQKYKPA. The chain crosses the membrane as a helical span at residues 42-62; it reads LSDWVHYIFLGSIMLFVFITN. Topologically, residues 63–64 are lumenal; that stretch reads PA. A helical transmembrane segment spans residues 65 to 85; it reads PWIFKILFYCFLGTLFIIPAT. The Cytoplasmic portion of the chain corresponds to 86–87; the sequence is SQ. The chain crosses the membrane as a helical span at residues 88–108; sequence FFFNALPILTWVALYFTSSYF. Topologically, residues 109-155 are lumenal; that stretch reads PDDRRPPITVKVLPAVETILYGDNLSDILATSTNSFLDILAWLPYGL. Residue Asn132 is glycosylated (N-linked (GlcNAc...) asparagine). The helical transmembrane segment at 156–176 threads the bilayer; that stretch reads FHFGAPFVVAAILFVFGPPTV. Topologically, residues 177-178 are cytoplasmic; sequence LQ. The helical transmembrane segment at 179-199 threads the bilayer; that stretch reads GYAFAFGYMNLFGVIMQNVFP. The Lumenal segment spans residues 200–245; sequence AAPPWYKILYGLQSANYDMHGSPGGLARIDKLLGINMYTTAFSNSS. A helical transmembrane segment spans residues 246-266; sequence VIFGAFPSLHSGCATMEALFF. At 267-268 the chain is on the cytoplasmic side; it reads CY. The chain crosses the membrane as a helical span at residues 269–289; sequence CFPKLKPLFIAYVCWLWWSTM. The Lumenal portion of the chain corresponds to 290-291; the sequence is YL. Residues 292 to 312 traverse the membrane as a helical segment; that stretch reads THHYFVDLMAGSVLSYVIFQY. The Cytoplasmic portion of the chain corresponds to 313 to 401; that stretch reads TKYTHLPIVD…SITSLGVKRA (89 aa). The disordered stretch occupies residues 374-401; sequence VSPSLFDGSTSVSRSSATSITSLGVKRA. Positions 382–395 are enriched in low complexity; that stretch reads STSVSRSSATSITS. Phosphoserine occurs at positions 392 and 395.

It belongs to the AUR1 family. As to quaternary structure, component of the inositol phosphorylceramide synthase complex composed of at least AUR1 and KEI1.

It is found in the golgi apparatus. The protein resides in the golgi stack membrane. The enzyme catalyses an N-(2R-hydroxy-very-long-chain fatty acyl)-(R)-4-hydroxysphingoid base + a 1,2-diacyl-sn-glycero-3-phospho-(1D-myo-inositol) = a 1D-myo-inositol-1-phospho-N-[(R)-2-hydroxy-very-long-chain fatty acyl]-(R)-4-hydroxysphingoid base + a 1,2-diacyl-sn-glycerol. With respect to regulation, inhibited by aureobasidin A (AbA), khafrefungin and rustmicin. Functionally, catalytic component of the inositol phosphorylceramide synthase which catalyzes the addition of a phosphorylinositol group onto ceramide to form inositol phosphorylceramide, an essential step in sphingolipid biosynthesis. The protein is Inositol phosphorylceramide synthase catalytic subunit AUR1 of Saccharomyces cerevisiae (strain ATCC 204508 / S288c) (Baker's yeast).